The primary structure comprises 344 residues: Dihydroorotase (344 aa).

Zn(2+) is bound by residues His-13 and His-15. Substrate-binding positions include 15–17 (HLR) and Asn-41. Lys-99, His-136, and His-174 together coordinate Zn(2+). At Lys-99 the chain carries N6-carboxylysine. His-136 is a binding site for substrate. Position 219 (Leu-219) interacts with substrate. Asp-247 contacts Zn(2+). The active site involves Asp-247. Substrate-binding residues include His-251 and Ala-263.

It belongs to the metallo-dependent hydrolases superfamily. DHOase family. Class II DHOase subfamily. In terms of assembly, homodimer. Zn(2+) serves as cofactor.

The enzyme catalyses (S)-dihydroorotate + H2O = N-carbamoyl-L-aspartate + H(+). The protein operates within pyrimidine metabolism; UMP biosynthesis via de novo pathway; (S)-dihydroorotate from bicarbonate: step 3/3. Catalyzes the reversible cyclization of carbamoyl aspartate to dihydroorotate. This Idiomarina loihiensis (strain ATCC BAA-735 / DSM 15497 / L2-TR) protein is Dihydroorotase.